The following is a 370-amino-acid chain: Queuine tRNA-ribosyltransferase (370 aa).

Catalysis depends on D89, which acts as the Proton acceptor. Substrate contacts are provided by residues 89-93 (DSGGF), D143, and G214. Residues 245–251 (GVGKPED) form an RNA binding region. Residue D264 is the Nucleophile of the active site. An RNA binding; important for wobble base 34 recognition region spans residues 269–273 (TRNAR). Zn(2+) contacts are provided by C302, C304, C307, and H333.

It belongs to the queuine tRNA-ribosyltransferase family. As to quaternary structure, homodimer. Within each dimer, one monomer is responsible for RNA recognition and catalysis, while the other monomer binds to the replacement base PreQ1. Zn(2+) is required as a cofactor.

It carries out the reaction 7-aminomethyl-7-carbaguanine + guanosine(34) in tRNA = 7-aminomethyl-7-carbaguanosine(34) in tRNA + guanine. It functions in the pathway tRNA modification; tRNA-queuosine biosynthesis. Its function is as follows. Catalyzes the base-exchange of a guanine (G) residue with the queuine precursor 7-aminomethyl-7-deazaguanine (PreQ1) at position 34 (anticodon wobble position) in tRNAs with GU(N) anticodons (tRNA-Asp, -Asn, -His and -Tyr). Catalysis occurs through a double-displacement mechanism. The nucleophile active site attacks the C1' of nucleotide 34 to detach the guanine base from the RNA, forming a covalent enzyme-RNA intermediate. The proton acceptor active site deprotonates the incoming PreQ1, allowing a nucleophilic attack on the C1' of the ribose to form the product. After dissociation, two additional enzymatic reactions on the tRNA convert PreQ1 to queuine (Q), resulting in the hypermodified nucleoside queuosine (7-(((4,5-cis-dihydroxy-2-cyclopenten-1-yl)amino)methyl)-7-deazaguanosine). The polypeptide is Queuine tRNA-ribosyltransferase (Buchnera aphidicola subsp. Acyrthosiphon pisum (strain 5A)).